The primary structure comprises 633 residues: 1-deoxy-D-xylulose-5-phosphate synthase (633 aa).

Thiamine diphosphate is bound by residues H72 and 113-115 (GHS). Position 144 (D144) interacts with Mg(2+). Thiamine diphosphate is bound by residues 145–146 (GA), N173, Y284, and E367. Mg(2+) is bound at residue N173.

The protein belongs to the transketolase family. DXPS subfamily. As to quaternary structure, homodimer. The cofactor is Mg(2+). Requires thiamine diphosphate as cofactor.

The enzyme catalyses D-glyceraldehyde 3-phosphate + pyruvate + H(+) = 1-deoxy-D-xylulose 5-phosphate + CO2. It functions in the pathway metabolic intermediate biosynthesis; 1-deoxy-D-xylulose 5-phosphate biosynthesis; 1-deoxy-D-xylulose 5-phosphate from D-glyceraldehyde 3-phosphate and pyruvate: step 1/1. Its function is as follows. Catalyzes the acyloin condensation reaction between C atoms 2 and 3 of pyruvate and glyceraldehyde 3-phosphate to yield 1-deoxy-D-xylulose-5-phosphate (DXP). The chain is 1-deoxy-D-xylulose-5-phosphate synthase from Bacillus velezensis (strain DSM 23117 / BGSC 10A6 / LMG 26770 / FZB42) (Bacillus amyloliquefaciens subsp. plantarum).